Reading from the N-terminus, the 336-residue chain is Aspartate carbamoyltransferase catalytic subunit (336 aa).

Positions 72 and 73 each coordinate carbamoyl phosphate. Lys-100 lines the L-aspartate pocket. The carbamoyl phosphate site is built by Arg-122, His-155, and Gln-158. The L-aspartate site is built by Arg-188 and Arg-242. Gly-288 and Pro-289 together coordinate carbamoyl phosphate.

The protein belongs to the aspartate/ornithine carbamoyltransferase superfamily. ATCase family. In terms of assembly, heterododecamer (2C3:3R2) of six catalytic PyrB chains organized as two trimers (C3), and six regulatory PyrI chains organized as three dimers (R2).

The catalysed reaction is carbamoyl phosphate + L-aspartate = N-carbamoyl-L-aspartate + phosphate + H(+). It participates in pyrimidine metabolism; UMP biosynthesis via de novo pathway; (S)-dihydroorotate from bicarbonate: step 2/3. Functionally, catalyzes the condensation of carbamoyl phosphate and aspartate to form carbamoyl aspartate and inorganic phosphate, the committed step in the de novo pyrimidine nucleotide biosynthesis pathway. This chain is Aspartate carbamoyltransferase catalytic subunit, found in Lactobacillus leichmannii.